The following is a 282-amino-acid chain: MNGLLRIRQRYQGLAQSDKKLADYLLLQPDTARHLSSQQLANEAGVSQSSVVKFAQKLGYKGFPALKLALSEALASQPESPSVPIHNQIRGDDPLRLVGEKLIKENTAAMYATLNVNSEEKLHECVTMLRSARRIILTGIGASGLVAQNFAWKLMKIGFNAAAVRDMHALLATVQASSPDDLLLAISYTGVRRELNLAADEMLRVGGKVLAITGFTPNALQQRASHCLYTIAEEQATNSASISACHAQGMLTDLLFIALIQQDLELAPERIRHSEALVKKLV.

One can recognise an HTH rpiR-type domain in the interval 1–77 (MNGLLRIRQR…LALSEALASQ (77 aa)). The H-T-H motif DNA-binding region spans 37-56 (SQQLANEAGVSQSSVVKFAQ). Residues 125-265 (CVTMLRSARR…FIALIQQDLE (141 aa)) enclose the SIS domain.

This is an uncharacterized protein from Escherichia coli (strain K12).